We begin with the raw amino-acid sequence, 389 residues long: Apoptosis inhibitor U19 (389 aa).

Belongs to the beta-herpesvirinae UL38 protein family. Interacts with host MDM2; this interaction leads to the stabilization of host TP53.

Its subcellular location is the host cytoplasm. It localises to the host nucleus. In terms of biological role, plays a role in the inhibition of host apoptosis to facilitate efficient viral replication. Promotes stabilization and inactivation of host TP53 through interaction with host MDM2. This chain is Apoptosis inhibitor U19 (U19), found in Human herpesvirus 6A (strain Uganda-1102) (HHV-6 variant A).